A 181-amino-acid polypeptide reads, in one-letter code: Insulin-like growth factor 2 (181 aa).

Positions 1-24 (MGIPVGKSLLMLFTFLAFASCCIA) are cleaved as a signal peptide. The b stretch occupies residues 25–52 (AYRPSETLCGGELVDTLQFVCGDRGFYF). 3 disulfide bridges follow: cysteine 33–cysteine 71, cysteine 45–cysteine 84, and cysteine 70–cysteine 75. Residues 53–64 (SRPASRINRRSR) are c. Residues 65–85 (GIVEECCFRSCDLALLETYCA) are a. The d stretch occupies residues 86–91 (TPAKSE). A propeptide spans 92 to 181 (RDVSTPPTVL…AFVEVSSDLQ (90 aa)) (e peptide). Threonine 163 carries O-linked (GalNAc...) threonine glycosylation.

This sequence belongs to the insulin family. In terms of assembly, interacts with MYORG; this interaction is required for IGF2 secretion. Interacts with integrins ITGAV:ITGB3 and ITGA6:ITGB4; integrin-binding is required for IGF2 signaling. Interacts with IGFBP2. In terms of processing, proteolytically processed by PCSK4, proIGF2 is cleaved at Arg-128 and Arg-92 to generate big-IGF2 and mature IGF2.

Its subcellular location is the secreted. Functionally, the insulin-like growth factors possess growth-promoting activity. Major fetal growth hormone in mammals. Plays a key role in regulating fetoplacental development. IGF2 is influenced by placental lactogen. Also involved in tissue differentiation. In adults, involved in glucose metabolism in adipose tissue, skeletal muscle and liver. Acts as a ligand for integrin which is required for IGF2 signaling. Positively regulates myogenic transcription factor MYOD1 function by facilitating the recruitment of transcriptional coactivators, thereby controlling muscle terminal differentiation. Inhibits myoblast differentiation and modulates metabolism via increasing the mitochondrial respiration rate. Its function is as follows. Preptin undergoes glucose-mediated co-secretion with insulin, and acts as a physiological amplifier of glucose-mediated insulin secretion. Exhibits osteogenic properties by increasing osteoblast mitogenic activity through phosphoactivation of MAPK1 and MAPK3. The polypeptide is Insulin-like growth factor 2 (Equus caballus (Horse)).